Here is a 418-residue protein sequence, read N- to C-terminus: Glutamyl-tRNA reductase (418 aa).

Substrate-binding positions include 49 to 52, S107, 112 to 114, and Q118; these read TCNR and EPQ. The Nucleophile role is filled by C50. NADP(+) is bound at residue 187-192; sequence GAGETI.

It belongs to the glutamyl-tRNA reductase family. In terms of assembly, homodimer.

It carries out the reaction (S)-4-amino-5-oxopentanoate + tRNA(Glu) + NADP(+) = L-glutamyl-tRNA(Glu) + NADPH + H(+). It functions in the pathway porphyrin-containing compound metabolism; protoporphyrin-IX biosynthesis; 5-aminolevulinate from L-glutamyl-tRNA(Glu): step 1/2. Catalyzes the NADPH-dependent reduction of glutamyl-tRNA(Glu) to glutamate 1-semialdehyde (GSA). This chain is Glutamyl-tRNA reductase, found in Aeromonas salmonicida (strain A449).